The sequence spans 300 residues: 4-diphosphocytidyl-2-C-methyl-D-erythritol kinase (300 aa).

Residue Lys22 is part of the active site. Residue Pro105–Ser115 participates in ATP binding. The active site involves Asp147.

Belongs to the GHMP kinase family. IspE subfamily.

It carries out the reaction 4-CDP-2-C-methyl-D-erythritol + ATP = 4-CDP-2-C-methyl-D-erythritol 2-phosphate + ADP + H(+). It participates in isoprenoid biosynthesis; isopentenyl diphosphate biosynthesis via DXP pathway; isopentenyl diphosphate from 1-deoxy-D-xylulose 5-phosphate: step 3/6. Catalyzes the phosphorylation of the position 2 hydroxy group of 4-diphosphocytidyl-2C-methyl-D-erythritol. This Colwellia psychrerythraea (strain 34H / ATCC BAA-681) (Vibrio psychroerythus) protein is 4-diphosphocytidyl-2-C-methyl-D-erythritol kinase.